Reading from the N-terminus, the 446-residue chain is Xanthone prenyltransferase A (446 aa).

Residues R113, K199, Y201, R263, K265, Y267, Y369, and Y440 each coordinate dimethylallyl diphosphate.

The protein belongs to the tryptophan dimethylallyltransferase family.

It participates in secondary metabolite biosynthesis. Xanthone prenyltransferase involved in the conversion of monodictyphenone to the prenyl xanthones such as emericellin, shamixanthone and epishamixanthone. Monodictyphenone is first converted to variecoxanthone A via a paeciloxanthone intermediate by the consecutive actions of the FAD-dependent monooxygenase mdpD and the xanthone prenyltransferase xptB. XptB catalyzes regular O-prenylation at the hydroxy group of C-7 of the xanthone ring. Variecoxanthone A is further prenylated to emericellin by xptA before being reduced to shamixanthone and epishamixanthone by the dehydrogenase xptC. The protein is Xanthone prenyltransferase A of Emericella nidulans (strain FGSC A4 / ATCC 38163 / CBS 112.46 / NRRL 194 / M139) (Aspergillus nidulans).